A 380-amino-acid polypeptide reads, in one-letter code: Erythronate-4-phosphate dehydrogenase (380 aa).

Substrate is bound by residues Ser45 and Thr66. Residues 126-127 (QV), Asp146, Thr174, 205-207 (ASR), and Asp231 each bind NAD(+). Arg207 is an active-site residue. The active site involves Glu236. Catalysis depends on His253, which acts as the Proton donor. Gly256 contacts NAD(+). Tyr257 is a substrate binding site.

The protein belongs to the D-isomer specific 2-hydroxyacid dehydrogenase family. PdxB subfamily. As to quaternary structure, homodimer.

The protein resides in the cytoplasm. It carries out the reaction 4-phospho-D-erythronate + NAD(+) = (R)-3-hydroxy-2-oxo-4-phosphooxybutanoate + NADH + H(+). Its pathway is cofactor biosynthesis; pyridoxine 5'-phosphate biosynthesis; pyridoxine 5'-phosphate from D-erythrose 4-phosphate: step 2/5. Functionally, catalyzes the oxidation of erythronate-4-phosphate to 3-hydroxy-2-oxo-4-phosphonooxybutanoate. The polypeptide is Erythronate-4-phosphate dehydrogenase (Pseudomonas syringae pv. tomato (strain ATCC BAA-871 / DC3000)).